The primary structure comprises 217 residues: Elongation factor Ts (217 aa).

The involved in Mg(2+) ion dislocation from EF-Tu stretch occupies residues 82–85; sequence TDFV.

This sequence belongs to the EF-Ts family.

It is found in the cytoplasm. Functionally, associates with the EF-Tu.GDP complex and induces the exchange of GDP to GTP. It remains bound to the aminoacyl-tRNA.EF-Tu.GTP complex up to the GTP hydrolysis stage on the ribosome. This is Elongation factor Ts from Desulfitobacterium hafniense (strain DSM 10664 / DCB-2).